The primary structure comprises 384 residues: Ubiquitin-like modifier-activating enzyme 5 (384 aa).

Residues G63, D84, K107, N130, and N164 each contribute to the ATP site. Zn(2+) is bound by residues C206 and C209. The Glycyl thioester intermediate role is filled by C230. Zn(2+) is bound by residues C283 and C288. Residues 352–375 (EAPEKSSAEATQAATAPVDDTSLE) form a disordered region.

It belongs to the ubiquitin-activating E1 family. UBA5 subfamily.

Functionally, E1-like enzyme which activates UFM1. The chain is Ubiquitin-like modifier-activating enzyme 5 from Drosophila persimilis (Fruit fly).